A 97-amino-acid polypeptide reads, in one-letter code: Integration host factor subunit alpha (97 aa).

This sequence belongs to the bacterial histone-like protein family. As to quaternary structure, heterodimer of an alpha and a beta chain.

This protein is one of the two subunits of integration host factor, a specific DNA-binding protein that functions in genetic recombination as well as in transcriptional and translational control. The polypeptide is Integration host factor subunit alpha (Hydrogenovibrio crunogenus (strain DSM 25203 / XCL-2) (Thiomicrospira crunogena)).